We begin with the raw amino-acid sequence, 163 residues long: Nucleotide-binding protein Mvan_0997 (163 aa).

The protein belongs to the YajQ family.

Its function is as follows. Nucleotide-binding protein. The chain is Nucleotide-binding protein Mvan_0997 from Mycolicibacterium vanbaalenii (strain DSM 7251 / JCM 13017 / BCRC 16820 / KCTC 9966 / NRRL B-24157 / PYR-1) (Mycobacterium vanbaalenii).